The following is a 316-amino-acid chain: Methionyl-tRNA formyltransferase (316 aa).

108–111 (SLLP) provides a ligand contact to (6S)-5,6,7,8-tetrahydrofolate.

This sequence belongs to the Fmt family.

The catalysed reaction is L-methionyl-tRNA(fMet) + (6R)-10-formyltetrahydrofolate = N-formyl-L-methionyl-tRNA(fMet) + (6S)-5,6,7,8-tetrahydrofolate + H(+). Functionally, attaches a formyl group to the free amino group of methionyl-tRNA(fMet). The formyl group appears to play a dual role in the initiator identity of N-formylmethionyl-tRNA by promoting its recognition by IF2 and preventing the misappropriation of this tRNA by the elongation apparatus. The sequence is that of Methionyl-tRNA formyltransferase from Heliobacterium modesticaldum (strain ATCC 51547 / Ice1).